Reading from the N-terminus, the 80-residue chain is MATKKPENMSFEAAIEELDGLVDQLENGDLALDDALKKFERGISLARAGQSKLNDAEQRVSILLKNDENAELSDFNPQPE.

Belongs to the XseB family. Heterooligomer composed of large and small subunits.

Its subcellular location is the cytoplasm. The enzyme catalyses Exonucleolytic cleavage in either 5'- to 3'- or 3'- to 5'-direction to yield nucleoside 5'-phosphates.. Bidirectionally degrades single-stranded DNA into large acid-insoluble oligonucleotides, which are then degraded further into small acid-soluble oligonucleotides. The chain is Exodeoxyribonuclease 7 small subunit from Vibrio atlanticus (strain LGP32) (Vibrio splendidus (strain Mel32)).